The primary structure comprises 308 residues: Glutaminase (308 aa).

Substrate contacts are provided by Ser66, Asn117, Glu161, Asn168, Tyr192, Tyr244, and Val262.

The protein belongs to the glutaminase family. As to quaternary structure, homotetramer.

The enzyme catalyses L-glutamine + H2O = L-glutamate + NH4(+). In Salmonella agona (strain SL483), this protein is Glutaminase.